The primary structure comprises 899 residues: Translation initiation factor IF-2 (899 aa).

2 disordered regions span residues Thr-94–Lys-167 and Phe-259–Glu-309. The span at Ala-107–Glu-121 shows a compositional bias: basic and acidic residues. Positions Arg-147–Val-164 are enriched in low complexity. A tr-type G domain is found at Thr-399–Lys-568. The tract at residues Gly-408–Thr-415 is G1. Gly-408–Thr-415 is a binding site for GTP. Residues Gly-433–His-437 are G2. The G3 stretch occupies residues Asp-454–Gly-457. Residues Asp-454 to His-458 and Asn-508 to Asp-511 each bind GTP. Positions Asn-508–Asp-511 are G4. The interval Ser-544 to His-546 is G5.

This sequence belongs to the TRAFAC class translation factor GTPase superfamily. Classic translation factor GTPase family. IF-2 subfamily.

The protein localises to the cytoplasm. Its function is as follows. One of the essential components for the initiation of protein synthesis. Protects formylmethionyl-tRNA from spontaneous hydrolysis and promotes its binding to the 30S ribosomal subunits. Also involved in the hydrolysis of GTP during the formation of the 70S ribosomal complex. The sequence is that of Translation initiation factor IF-2 from Acinetobacter baylyi (strain ATCC 33305 / BD413 / ADP1).